Reading from the N-terminus, the 347-residue chain is MDYKTSGVDIEAGREFVSEIKQAVEGTHTSNVIDGIGGFGGLFRIPVDSFKKPVLVSGTDGVGTKLELAQSKNFHFEVGIDLVAMCMNDIITCGAKPLFFLDYIATGKLDKKQLLQVVQGISHGCGENNCSLLGGETAEMPGFYSNNKYDLAGFCVGIVDEDKLINGKKISENDLIIALKSNGVHSNGFSLVRKIIQNNNQLDKEFEKVSHLNFYDELLKPTKIYNNVVNQILSENIEIKAMSHITGGGIPENLPRCIPSDFIPYINTNSWEIPILFKFLKEKGTIPEKDFWNTFNLGVGFCLIIDKQFKDSILNICKDHDIDSWEIGKIVRKNDSTISKFLPEILT.

It belongs to the AIR synthase family.

Its subcellular location is the cytoplasm. It catalyses the reaction 2-formamido-N(1)-(5-O-phospho-beta-D-ribosyl)acetamidine + ATP = 5-amino-1-(5-phospho-beta-D-ribosyl)imidazole + ADP + phosphate + H(+). It functions in the pathway purine metabolism; IMP biosynthesis via de novo pathway; 5-amino-1-(5-phospho-D-ribosyl)imidazole from N(2)-formyl-N(1)-(5-phospho-D-ribosyl)glycinamide: step 2/2. The polypeptide is Phosphoribosylformylglycinamidine cyclo-ligase (Prochlorococcus marinus (strain MIT 9312)).